Here is a 362-residue protein sequence, read N- to C-terminus: Probable cinnamyl alcohol dehydrogenase 8D (362 aa).

Cys45 lines the Zn(2+) pocket. Thr47 is a binding site for NADP(+). Positions 67, 68, 98, 101, 104, 112, and 161 each coordinate Zn(2+). Residues Thr165, 186–191 (GLGGLG), 209–214 (SSSPAK), Thr249, Gly273, and 296–298 (NGV) contribute to the NADP(+) site.

Belongs to the zinc-containing alcohol dehydrogenase family. In terms of assembly, homodimer. It depends on Zn(2+) as a cofactor.

It carries out the reaction (E)-cinnamyl alcohol + NADP(+) = (E)-cinnamaldehyde + NADPH + H(+). The enzyme catalyses (E)-coniferol + NADP(+) = (E)-coniferaldehyde + NADPH + H(+). It catalyses the reaction (E)-sinapyl alcohol + NADP(+) = (E)-sinapaldehyde + NADPH + H(+). The catalysed reaction is (E)-4-coumaroyl alcohol + NADP(+) = (E)-4-coumaraldehyde + NADPH + H(+). It carries out the reaction (E)-caffeyl alcohol + NADP(+) = (E)-caffeyl aldehyde + NADPH + H(+). It functions in the pathway aromatic compound metabolism; phenylpropanoid biosynthesis. Functionally, involved in lignin biosynthesis. Catalyzes the final step specific for the production of lignin monomers. Catalyzes the NADPH-dependent reduction of coniferaldehyde, 5-hydroxyconiferaldehyde, sinapaldehyde, 4-coumaraldehyde and caffeyl aldehyde to their respective alcohols. This Oryza sativa subsp. japonica (Rice) protein is Probable cinnamyl alcohol dehydrogenase 8D.